Here is a 319-residue protein sequence, read N- to C-terminus: MELIKEETAPEDDSRGRQRDCRTSVVSSKQVQRNQLEICPGLVSGDVHPMCRDRSDPEPRTGDAASDDGFPADKTSSKRDSECAAVNTDGVSDGRQGKKKHRRRPSKKKRRWKPYFKLTWEEKKELDERETARASRVRAEMFAKGLPVAPYNTTQFLMEEHDREEPDLNTELGGRKSGAIRSEDTASEDENFEAEEDDEEEGGGGSDGMGRPGQAGGEFLQKDFSETYEKYHVEALQNMSKQELVREYLELEKCMSRLEEENNWLRHVRRNPESPADGTGSQRVRELEVEVEKLRAENNELLLKTPASNEPGLNQSQPS.

The segment covering 1-22 (MELIKEETAPEDDSRGRQRDCR) has biased composition (basic and acidic residues). Disordered stretches follow at residues 1–111 (MELI…KKRR), 157–223 (LMEE…LQKD), 262–286 (NNWL…RVRE), and 299–319 (NELL…SQPS). Over residues 24-35 (SVVSSKQVQRNQ) the composition is skewed to polar residues. The span at 49–61 (PMCRDRSDPEPRT) shows a compositional bias: basic and acidic residues. The span at 97 to 111 (GKKKHRRRPSKKKRR) shows a compositional bias: basic residues. Acidic residues predominate over residues 185–202 (TASEDENFEAEEDDEEEG). A compositionally biased stretch (gly residues) spans 203–216 (GGGSDGMGRPGQAG). The stretch at 240–306 (SKQELVREYL…ENNELLLKTP (67 aa)) forms a coiled coil. A compositionally biased stretch (polar residues) spans 306–319 (PASNEPGLNQSQPS).

The protein belongs to the HEXIM family. Homooligomer and heterooligomer. Core component of the 7SK RNP complex.

It is found in the nucleus. It localises to the cytoplasm. Its function is as follows. Transcriptional regulator which functions as a general RNA polymerase II transcription inhibitor. Core component of the 7SK RNP complex: in cooperation with 7SK snRNA sequesters P-TEFb in a large inactive 7SK snRNP complex preventing RNA polymerase II phosphorylation and subsequent transcriptional elongation. Plays a role in the regulation of DNA virus-mediated innate immune response by assembling into the HDP-RNP complex, a complex that serves as a platform for IRF3 phosphorylation and subsequent innate immune response activation through the cGAS-STING pathway. The sequence is that of Protein HEXIM1 (hexim1) from Danio rerio (Zebrafish).